A 1337-amino-acid chain; its full sequence is Aldehyde oxidase 4 (1337 aa).

One can recognise a 2Fe-2S ferredoxin-type domain in the interval 4-91; sequence DDLVFAVNGE…GCSITTSDGL (88 aa). The [2Fe-2S] cluster site is built by Cys-43, Cys-48, Cys-51, Cys-73, Cys-113, Cys-116, Cys-155, and Cys-157. An FAD-binding PCMH-type domain is found at 225–409; it reads LDQTRYHWST…LKVHIPRWIA (185 aa). FAD-binding positions include 259–266, 342–346, Asp-358, and Leu-399; these read LVVGNTGT and SIGGN. Mo-molybdopterin is bound by residues Gln-771, Phe-802, and Arg-915. Glu-1265 acts as the Proton acceptor in catalysis.

It belongs to the xanthine dehydrogenase family. As to quaternary structure, aldehyde oxidases (AO) are homodimers and heterodimers of AO subunits. Requires [2Fe-2S] cluster as cofactor. FAD is required as a cofactor. The cofactor is Mo-molybdopterin. As to expression, transcripts expressed at high levels in developing siliques and at low levels in dry seeds.

The protein resides in the cytoplasm. It catalyses the reaction indole-3-acetaldehyde + O2 + H2O = (indol-3-yl)acetate + H2O2 + H(+). The catalysed reaction is an aldehyde + O2 + H2O = a carboxylate + H2O2 + H(+). The enzyme catalyses benzaldehyde + O2 + H2O = benzoate + H2O2 + H(+). It carries out the reaction hexanal + O2 + H2O = hexanoate + H2O2 + H(+). It catalyses the reaction 1-naphthaldehyde + O2 + H2O = 1-naphthoate + H2O2 + H(+). The catalysed reaction is vanillin + O2 + H2O = vanillate + H2O2 + H(+). The enzyme catalyses malonaldehyde + O2 + H2O = 3-oxopropanoate + H2O2 + H(+). It carries out the reaction citral + O2 + H2O = 3,7-dimethylocta-2,6-dienoate + H2O2 + H(+). It catalyses the reaction acrolein + O2 + H2O = acrylate + H2O2 + H(+). The catalysed reaction is (E)-4-hydroxynon-2-enal + O2 + H2O = (E)-4-hydroxynon-2-enoate + H2O2 + H(+). The enzyme catalyses (E)-cinnamaldehyde + O2 + H2O = (E)-cinnamate + H2O2 + H(+). It carries out the reaction indole-3-carbaldehyde + O2 + H2O = indole-3-carboxylate + H2O2 + H(+). It catalyses the reaction propanal + O2 + H2O = propanoate + H2O2 + H(+). The catalysed reaction is dodecanal + O2 + H2O = dodecanoate + H2O2 + H(+). The enzyme catalyses salicylaldehyde + O2 + H2O = salicylate + H2O2 + H(+). With respect to regulation, inhibited by Cu(2+). In terms of biological role, aldehyde oxidase with a broad substrate specificity. Involved in the accumulation of benzoic acid (BA) in siliques. Delays and protects siliques from senescence by catalyzing aldehyde detoxification in siliques. Catalyzes the oxidation of an array of aromatic and aliphatic aldehydes, including vanillin and the reactive carbonyl species (RCS) acrolein, 4-hydroxyl-2-nonenal (HNE), and malondialdehyde (MDA). The chain is Aldehyde oxidase 4 from Arabidopsis thaliana (Mouse-ear cress).